The sequence spans 352 residues: Phenylalanine--tRNA ligase alpha subunit (352 aa).

Mg(2+) is bound at residue glutamate 258.

This sequence belongs to the class-II aminoacyl-tRNA synthetase family. Phe-tRNA synthetase alpha subunit type 1 subfamily. Tetramer of two alpha and two beta subunits. Requires Mg(2+) as cofactor.

It localises to the cytoplasm. The enzyme catalyses tRNA(Phe) + L-phenylalanine + ATP = L-phenylalanyl-tRNA(Phe) + AMP + diphosphate + H(+). This chain is Phenylalanine--tRNA ligase alpha subunit, found in Staphylococcus carnosus (strain TM300).